A 260-amino-acid chain; its full sequence is 3-alpha-(or 20-beta)-hydroxysteroid dehydrogenase (260 aa).

NAD(+) contacts are provided by R17, M19, D38, D61, V62, N88, Y153, K157, V186, T188, and T191. Y153 functions as the Proton acceptor in the catalytic mechanism.

Belongs to the short-chain dehydrogenases/reductases (SDR) family. As to quaternary structure, homotetramer.

It catalyses the reaction androstan-3alpha,17beta-diol + NAD(+) = 17beta-hydroxyandrostanone + NADH + H(+). Its pathway is lipid metabolism; steroid degradation. Functionally, probably involved in steroid metabolism. In Mycobacterium tuberculosis (strain CDC 1551 / Oshkosh), this protein is 3-alpha-(or 20-beta)-hydroxysteroid dehydrogenase (fabG3).